A 135-amino-acid chain; its full sequence is Ribosome-binding factor A (135 aa).

The protein belongs to the RbfA family. As to quaternary structure, monomer. Binds 30S ribosomal subunits, but not 50S ribosomal subunits or 70S ribosomes.

Its subcellular location is the cytoplasm. Its function is as follows. One of several proteins that assist in the late maturation steps of the functional core of the 30S ribosomal subunit. Associates with free 30S ribosomal subunits (but not with 30S subunits that are part of 70S ribosomes or polysomes). Required for efficient processing of 16S rRNA. May interact with the 5'-terminal helix region of 16S rRNA. The polypeptide is Ribosome-binding factor A (Rhizobium meliloti (strain 1021) (Ensifer meliloti)).